A 393-amino-acid chain; its full sequence is Succinate--CoA ligase [ADP-forming] subunit beta (393 aa).

The ATP-grasp domain maps to 9–245 (KMLFAQYGIP…PSQEDKCETY (237 aa)). Residues Lys46, 53-55 (GRG), Glu99, Ile102, and Glu107 contribute to the ATP site. Residues Asn200 and Asp214 each contribute to the Mg(2+) site. Substrate is bound by residues Asn265 and 322–324 (GIV).

This sequence belongs to the succinate/malate CoA ligase beta subunit family. In terms of assembly, heterotetramer of two alpha and two beta subunits. Mg(2+) serves as cofactor.

The catalysed reaction is succinate + ATP + CoA = succinyl-CoA + ADP + phosphate. It carries out the reaction GTP + succinate + CoA = succinyl-CoA + GDP + phosphate. Its pathway is carbohydrate metabolism; tricarboxylic acid cycle; succinate from succinyl-CoA (ligase route): step 1/1. Its function is as follows. Succinyl-CoA synthetase functions in the citric acid cycle (TCA), coupling the hydrolysis of succinyl-CoA to the synthesis of either ATP or GTP and thus represents the only step of substrate-level phosphorylation in the TCA. The beta subunit provides nucleotide specificity of the enzyme and binds the substrate succinate, while the binding sites for coenzyme A and phosphate are found in the alpha subunit. In Baumannia cicadellinicola subsp. Homalodisca coagulata, this protein is Succinate--CoA ligase [ADP-forming] subunit beta.